Here is a 401-residue protein sequence, read N- to C-terminus: Phosphoglycerate kinase (401 aa).

Residues 20–22 (DFN), R35, 58–61 (HLGR), R117, and R154 contribute to the substrate site. ATP is bound by residues K204, G298, E329, and 358–361 (GGDS).

Belongs to the phosphoglycerate kinase family. Monomer.

The protein resides in the cytoplasm. It carries out the reaction (2R)-3-phosphoglycerate + ATP = (2R)-3-phospho-glyceroyl phosphate + ADP. Its pathway is carbohydrate degradation; glycolysis; pyruvate from D-glyceraldehyde 3-phosphate: step 2/5. In Bifidobacterium longum (strain DJO10A), this protein is Phosphoglycerate kinase.